The chain runs to 251 residues: Probable phosphatase Sputcn32_1369 (251 aa).

Residues His-8, His-10, His-16, His-41, Glu-74, His-102, His-132, Asp-193, and His-195 each contribute to the Zn(2+) site.

The protein belongs to the PHP family. It depends on Zn(2+) as a cofactor.

The chain is Probable phosphatase Sputcn32_1369 from Shewanella putrefaciens (strain CN-32 / ATCC BAA-453).